Reading from the N-terminus, the 162-residue chain is SsrA-binding protein (162 aa).

This sequence belongs to the SmpB family.

The protein resides in the cytoplasm. Its function is as follows. Required for rescue of stalled ribosomes mediated by trans-translation. Binds to transfer-messenger RNA (tmRNA), required for stable association of tmRNA with ribosomes. tmRNA and SmpB together mimic tRNA shape, replacing the anticodon stem-loop with SmpB. tmRNA is encoded by the ssrA gene; the 2 termini fold to resemble tRNA(Ala) and it encodes a 'tag peptide', a short internal open reading frame. During trans-translation Ala-aminoacylated tmRNA acts like a tRNA, entering the A-site of stalled ribosomes, displacing the stalled mRNA. The ribosome then switches to translate the ORF on the tmRNA; the nascent peptide is terminated with the 'tag peptide' encoded by the tmRNA and targeted for degradation. The ribosome is freed to recommence translation, which seems to be the essential function of trans-translation. The chain is SsrA-binding protein from Shewanella frigidimarina (strain NCIMB 400).